A 246-amino-acid chain; its full sequence is Probable maleylacetoacetate isomerase 1 (246 aa).

In terms of domain architecture, GST N-terminal spans 32–116; sequence TKPILYSYWP…YLEETRPQPA (85 aa). Residues 42–47, valine 88, 100–101, glutamine 140, and 144–146 contribute to the glutathione site; these read SSCSWR, DS, and NVS. Residues 121–241 enclose the GST C-terminal domain; sequence DPVKRAKIRE…HPSTQPDCPP (121 aa).

This sequence belongs to the GST superfamily. Zeta family. It depends on glutathione as a cofactor.

It localises to the cytoplasm. It carries out the reaction 4-maleylacetoacetate = 4-fumarylacetoacetate. It catalyses the reaction RX + glutathione = an S-substituted glutathione + a halide anion + H(+). Its pathway is amino-acid degradation; L-phenylalanine degradation; acetoacetate and fumarate from L-phenylalanine: step 5/6. Functionally, catalyzes the glutathione dependent oxygenation of dichloroacetic acid to glyoxylic acid in vitro. Possesses low glutathione thioltransferase activity toward 4-hydroxynonenal (4-HNE). Has no glutathione thioltransferase activity with adrenochrome, phenethyl isothiocyanate (PEITC), 5-hydroperoxyeicosatetraenoic acid ((5S)-HpETE), prostaglandin A2 (PGA2) or 2-hydroxyethyldisulfide (HED). The chain is Probable maleylacetoacetate isomerase 1 (GstZ1) from Drosophila melanogaster (Fruit fly).